The sequence spans 525 residues: NADH-quinone oxidoreductase subunit N (525 aa).

14 consecutive transmembrane segments (helical) span residues 26-46, 53-73, 90-110, 143-163, 167-187, 202-222, 246-266, 278-298, 314-334, 341-361, 368-388, 411-431, 449-469, and 487-507; these read LSPM…DAFA, VLQP…VVLL, PTLF…LLVA, VQTE…LFVA, LLVM…LCGL, YFLL…FAYG, LYLS…AAPF, PTPI…GALL, PVIW…ALTQ, LAYS…GSNI, MFYL…VSLV, LAGT…TSGF, LVVV…RVIV, and PTLT…LGVA.

This sequence belongs to the complex I subunit 2 family. As to quaternary structure, NDH-1 is composed of 14 different subunits. Subunits NuoA, H, J, K, L, M, N constitute the membrane sector of the complex.

The protein localises to the cell membrane. The enzyme catalyses a quinone + NADH + 5 H(+)(in) = a quinol + NAD(+) + 4 H(+)(out). NDH-1 shuttles electrons from NADH, via FMN and iron-sulfur (Fe-S) centers, to quinones in the respiratory chain. The immediate electron acceptor for the enzyme in this species is believed to be a menaquinone. Couples the redox reaction to proton translocation (for every two electrons transferred, four hydrogen ions are translocated across the cytoplasmic membrane), and thus conserves the redox energy in a proton gradient. The chain is NADH-quinone oxidoreductase subunit N from Parafrankia sp. (strain EAN1pec).